We begin with the raw amino-acid sequence, 151 residues long: Brain ribonuclease (151 aa).

Residues 1–25 (KESAAAKFRRQHMDAGSSSSGNSNY) form a disordered region. Residues K7 and R10 each coordinate substrate. H12 acts as the Proton acceptor in catalysis. Cystine bridges form between C26–C84, C40–C95, C58–C110, and C65–C72. 41–45 (KPVNT) serves as a coordination point for substrate. N-linked (GlcNAc...) asparagine glycosylation is present at N62. K66 and R85 together coordinate substrate. H119 (proton donor) is an active-site residue. T129 is a glycosylation site (O-linked (GalNAc...) threonine). O-linked (GalNAc...) serine glycosylation is present at S133.

The protein belongs to the pancreatic ribonuclease family.

The protein localises to the secreted. This Axis porcinus (Hog deer) protein is Brain ribonuclease (BRN).